We begin with the raw amino-acid sequence, 315 residues long: MLDFEKPLFEIKNKIDALKESQEKNDVDLQEEIDMLEASLERETEKIYMHLKPWDRVQLARLQERPTTLDYISYIFDEFIELHGDRNYRDDPAMVGGIGYLNGQPVTVIGQQRGKDTKDNIYRNFGMAHPEGYRKALRLMKQAEKFGRPIFTFIDTKGAYPGKAAEERGQSESIAKNLIEMASLKVPVISLVIGEGGSGGALGIGIANRVLMLENSTYSVISPEGAAALLWKDSNLSKIAAETMKITAPDLKELQIIDDVINEPLGGAHKDVALQAERIKEAFTKQLSELEKLNGQELADDRFEKFRQIGEFKEQ.

In terms of domain architecture, CoA carboxyltransferase C-terminal spans 32–289 (EIDMLEASLE…KEAFTKQLSE (258 aa)).

It belongs to the AccA family. In terms of assembly, acetyl-CoA carboxylase is a heterohexamer composed of biotin carboxyl carrier protein (AccB), biotin carboxylase (AccC) and two subunits each of ACCase subunit alpha (AccA) and ACCase subunit beta (AccD).

The protein localises to the cytoplasm. It catalyses the reaction N(6)-carboxybiotinyl-L-lysyl-[protein] + acetyl-CoA = N(6)-biotinyl-L-lysyl-[protein] + malonyl-CoA. It functions in the pathway lipid metabolism; malonyl-CoA biosynthesis; malonyl-CoA from acetyl-CoA: step 1/1. In terms of biological role, component of the acetyl coenzyme A carboxylase (ACC) complex. First, biotin carboxylase catalyzes the carboxylation of biotin on its carrier protein (BCCP) and then the CO(2) group is transferred by the carboxyltransferase to acetyl-CoA to form malonyl-CoA. In Staphylococcus carnosus (strain TM300), this protein is Acetyl-coenzyme A carboxylase carboxyl transferase subunit alpha.